Consider the following 232-residue polypeptide: Small ribosomal subunit protein uS3 (232 aa).

Residues 39–107 (VRQYLTKELK…PAQINIAEVR (69 aa)) enclose the KH type-2 domain.

It belongs to the universal ribosomal protein uS3 family. In terms of assembly, part of the 30S ribosomal subunit. Forms a tight complex with proteins S10 and S14.

Functionally, binds the lower part of the 30S subunit head. Binds mRNA in the 70S ribosome, positioning it for translation. In Aliivibrio salmonicida (strain LFI1238) (Vibrio salmonicida (strain LFI1238)), this protein is Small ribosomal subunit protein uS3.